The sequence spans 689 residues: tRNA wybutosine-synthesizing protein 4 (689 aa).

The interval 1–33 (MTSTSKLDANQLARQRKKLEKDRRKKVYDDQQV) is disordered. Positions 14–26 (RQRKKLEKDRRKK) are enriched in basic residues. Residues arginine 84, glycine 111, aspartate 137, 183-184 (DL), and glutamate 215 each bind S-adenosyl-L-methionine.

This sequence belongs to the methyltransferase superfamily. LCMT family.

The enzyme catalyses 7-[(3S)-3-amino-3-carboxypropyl]wyosine(37) in tRNA(Phe) + S-adenosyl-L-methionine = 7-[(3S)-(3-amino-3-methoxycarbonyl)propyl]wyosine(37) in tRNA(Phe) + S-adenosyl-L-homocysteine. The catalysed reaction is 7-[(3S)-(3-amino-3-methoxycarbonyl)propyl]wyosine(37) in tRNA(Phe) + S-adenosyl-L-methionine + CO2 = wybutosine(37) in tRNA(Phe) + S-adenosyl-L-homocysteine + 2 H(+). It functions in the pathway tRNA modification; wybutosine-tRNA(Phe) biosynthesis. Functionally, probable S-adenosyl-L-methionine-dependent methyltransferase that acts as a component of the wybutosine biosynthesis pathway. Wybutosine is a hyper modified guanosine with a tricyclic base found at the 3'-position adjacent to the anticodon of eukaryotic phenylalanine tRNA. May methylate the carboxyl group of leucine residues to form alpha-leucine ester residues. The sequence is that of tRNA wybutosine-synthesizing protein 4 (PPM2) from Candida albicans (strain SC5314 / ATCC MYA-2876) (Yeast).